Here is a 423-residue protein sequence, read N- to C-terminus: Peroxisomal membrane protein PMP47A (423 aa).

Solcar repeat units lie at residues 6-120 (YDDL…TGKT), 142-230 (LSVW…LKSF), and 239-373 (ITPV…LLIL). A helical transmembrane segment spans residues 12–32 (AFAGAGGGLLSMTLTYPLVTL). Over residues 43 to 53 (KKDQEKEKENS) the composition is skewed to basic and acidic residues. The segment at 43 to 70 (KKDQEKEKENSNEDGSLSPKSSNTSDVS) is disordered. The span at 55 to 70 (EDGSLSPKSSNTSDVS) shows a compositional bias: polar residues. 4 consecutive transmembrane segments (helical) span residues 98–118 (SALF…ELTG), 148–168 (MAAG…IWVA), 204–224 (FTGI…YTIF), and 245–265 (LLLG…YITL). The interval 278-308 (SEDVEKERTDSVQSLPEDGSDEDNLKENSAK) is disordered. The chain crosses the membrane as a helical span at residues 353 to 373 (LLQSILNAAFLFYFKEELLIL).

It belongs to the mitochondrial carrier (TC 2.A.29) family.

It is found in the peroxisome membrane. May have transport activity. The sequence is that of Peroxisomal membrane protein PMP47A (PMP47A) from Candida boidinii (Yeast).